The chain runs to 56 residues: Bacteriocin sublancin-168 (56 aa).

Positions Met-1–Ser-19 are excised as a propeptide. 2 disulfides stabilise this stretch: Cys-26–Cys-55 and Cys-33–Cys-48. Residue Cys-41 is glycosylated (S-linked (Glc) cysteine; by host).

Monomer. Post-translationally, production of active sublancin-168 requires at least one thiol-disulfide oxidoreductase (BdbB or, in its absence, BdbC). Membrane translocation and cleavage of the precursor are probably performed by SunT.

It localises to the secreted. Bacteriocin active against Gram-positive bacteria. Inhibits B.cereus spore outgrowth, after the germination stage, approximately 1000-fold better than it inhibits exponential growth of the same cells. Inhibits B.subtilis strain ATCC 6633. This is Bacteriocin sublancin-168 (sunA) from Bacillus pumilus (Bacillus mesentericus).